A 379-amino-acid chain; its full sequence is Chaperone protein DnaJ (379 aa).

In terms of domain architecture, J spans 7–72 (CYYETLEVER…DKRAAYDRYG (66 aa)). The segment at 135–213 (GKTAQIEIPV…CTGSGRVTKE (79 aa)) adopts a CR-type zinc-finger fold. Positions 148, 151, 165, 168, 187, 190, 201, and 204 each coordinate Zn(2+). CXXCXGXG motif repeat units lie at residues 148–155 (CESCSGTG), 165–172 (CSTCGGAG), 187–194 (CPSCQGRG), and 201–208 (CPSCTGSG).

Belongs to the DnaJ family. In terms of assembly, homodimer. The cofactor is Zn(2+).

It is found in the cytoplasm. In terms of biological role, participates actively in the response to hyperosmotic and heat shock by preventing the aggregation of stress-denatured proteins and by disaggregating proteins, also in an autonomous, DnaK-independent fashion. Unfolded proteins bind initially to DnaJ; upon interaction with the DnaJ-bound protein, DnaK hydrolyzes its bound ATP, resulting in the formation of a stable complex. GrpE releases ADP from DnaK; ATP binding to DnaK triggers the release of the substrate protein, thus completing the reaction cycle. Several rounds of ATP-dependent interactions between DnaJ, DnaK and GrpE are required for fully efficient folding. Also involved, together with DnaK and GrpE, in the DNA replication of plasmids through activation of initiation proteins. This is Chaperone protein DnaJ from Rhodopseudomonas palustris (strain HaA2).